Here is a 261-residue protein sequence, read N- to C-terminus: MKIRVGVIGCLGRMGKKILNELITNTKVEIAGAVARSGSKYIDSDIGPIIANLGIKVTSSISGIFESSDVVIDFTTKECMLDCLKAAVKFKTPLVSGTTGIEGVDLKEYAAEVPILWSANMSVGVNVLLKLVKKAAELLGNEYDVEIWEMHHNLKKDSPSGTAIELGKTIANASKVDFQSNQYLHSGSNIRKKGGIGFAVSRGGGVIGDHSVMFVNSDERIELNHKAIDRTTFARGAVQAAVWLYENKREIPGLYSMQDVI.

Position 9-14 (glycine 9–methionine 14) interacts with NAD(+). Arginine 36 lines the NADP(+) pocket. NAD(+)-binding positions include glycine 97 to threonine 99 and serine 118 to methionine 121. Histidine 151 serves as the catalytic Proton donor/acceptor. Residue histidine 152 coordinates (S)-2,3,4,5-tetrahydrodipicolinate. Lysine 155 (proton donor) is an active-site residue. Residue glycine 161–threonine 162 coordinates (S)-2,3,4,5-tetrahydrodipicolinate.

This sequence belongs to the DapB family.

The protein resides in the cytoplasm. It carries out the reaction (S)-2,3,4,5-tetrahydrodipicolinate + NAD(+) + H2O = (2S,4S)-4-hydroxy-2,3,4,5-tetrahydrodipicolinate + NADH + H(+). It catalyses the reaction (S)-2,3,4,5-tetrahydrodipicolinate + NADP(+) + H2O = (2S,4S)-4-hydroxy-2,3,4,5-tetrahydrodipicolinate + NADPH + H(+). Its pathway is amino-acid biosynthesis; L-lysine biosynthesis via DAP pathway; (S)-tetrahydrodipicolinate from L-aspartate: step 4/4. Its function is as follows. Catalyzes the conversion of 4-hydroxy-tetrahydrodipicolinate (HTPA) to tetrahydrodipicolinate. The sequence is that of 4-hydroxy-tetrahydrodipicolinate reductase from Wolbachia pipientis wMel.